Reading from the N-terminus, the 95-residue chain is MLHTLMKSPFETNVSLVISMLKKSDDFLALQDGVLIALKDNIFLKSIIMSPVKLYLIKEDVYARGIRKNISREFILINYIHFVSLTLKHKKQMTW.

It belongs to the DsrH/TusB family. In terms of assembly, heterohexamer, formed by a dimer of trimers. The hexameric TusBCD complex contains 2 copies each of TusB, TusC and TusD. The TusBCD complex interacts with TusE.

It is found in the cytoplasm. Part of a sulfur-relay system required for 2-thiolation of 5-methylaminomethyl-2-thiouridine (mnm(5)s(2)U) at tRNA wobble positions. In Buchnera aphidicola subsp. Acyrthosiphon pisum (strain 5A), this protein is Protein TusB.